The following is a 149-amino-acid chain: MAKIQVILLEDVAGQGRKGEIVTVSDGYAHNFLLKGKKGVLATPEELQKIENRKKKEAKKQEEERNKSLELKKLLESKVLDIPVKAGENGKLFGAITSKEIASQIKEELGLDIDKKKIEANIKNLGPDEVHIKLFTDVKAVIKVNVIAK.

This sequence belongs to the bacterial ribosomal protein bL9 family.

In terms of biological role, binds to the 23S rRNA. The polypeptide is Large ribosomal subunit protein bL9 (Fusobacterium nucleatum subsp. nucleatum (strain ATCC 25586 / DSM 15643 / BCRC 10681 / CIP 101130 / JCM 8532 / KCTC 2640 / LMG 13131 / VPI 4355)).